Consider the following 297-residue polypeptide: ClpXP adapter protein SpxH (297 aa).

Belongs to the SpxH family. In terms of assembly, interacts with Spx.

Its subcellular location is the cytoplasm. Functionally, adapter protein required for efficient degradation of Spx by ClpXP under non-stress conditions. Interaction with Spx stabilizes Spx and exposes the C-terminus of Spx for recognition and proteolysis by ClpXP. This is ClpXP adapter protein SpxH from Bacillus thuringiensis subsp. konkukian (strain 97-27).